A 203-amino-acid polypeptide reads, in one-letter code: Short chain dehydrogenase/reductase dpmpH (203 aa).

Residues aspartate 23, tyrosine 77, and lysine 81 each coordinate NADP(+). The Proton acceptor role is filled by tyrosine 77. The active-site Lowers pKa of active site Tyr is the lysine 81.

This sequence belongs to the short-chain dehydrogenases/reductases (SDR) family.

The protein operates within secondary metabolite biosynthesis; terpenoid biosynthesis. Functionally, short chain dehydrogenase/reductase; part of the gene cluster that mediates the biosynthesis of diterpenoid pyrones. The first step of the pathway is the synthesis of the alpha-pyrone moiety by the polyketide synthase dpmpA via condensation of one acetyl-CoA starter unit with 3 malonyl-CoA units and 2 methylations. The alpha-pyrone is then combined with geranylgeranyl pyrophosphate (GGPP) formed by the GGPP synthase dpmpD through the action of the prenyltransferase dpmpC to yield a linear alpha-pyrone diterpenoid. Subsequent steps in the diterpenoid pyrone biosynthetic pathway involve the decalin core formation, which is initiated by the epoxidation of the C10-C11 olefin by the FAD-dependent oxidoreductase dpmpE, and is followed by a cyclization cascade catalyzed by the terpene cyclase dpmpB. The short chain dehydrogenase/reductase dpmpG then oxidizes the 8S hydroxy group to a ketone and the short chain dehydrogenase/reductase dpmpH reduces the ketone to the 8R hydroxy group to yield higginsianin B. Higginsianin B is further methylated by the methyltransferase dpmpI to produce the intermediate named FDDP B. The cytochrome P450 monooxygenase dpmpJ then oxidizes the C-26 methyl to primary alcohol, producing the final diterpenoid pyrone with a C-26 primary alcohol on the gamma-pyrone moiety named FDDP C. The protein is Short chain dehydrogenase/reductase dpmpH of Macrophomina phaseolina (strain MS6) (Charcoal rot fungus).